The following is a 221-amino-acid chain: Antigenic protein SchS34 (221 aa).

4 N-linked (GlcNAc...) asparagine glycosylation sites follow: asparagine 27, asparagine 69, asparagine 141, and asparagine 215.

As to expression, expressed in the mycelium (at protein level).

It localises to the secreted. The protein localises to the spore. The protein resides in the spore wall. Its subcellular location is the cytoplasm. The sequence is that of Antigenic protein SchS34 from Stachybotrys chartarum (Toxic black mold).